Reading from the N-terminus, the 382-residue chain is Transcription termination/antitermination protein NusA (382 aa).

An S1 motif domain is found at 135-199 (EDIMTGIVQR…KGPQIMISRT (65 aa)). The KH domain maps to 301 to 367 (EKTTQVIVPD…TLALDQETAD (67 aa)). The disordered stretch occupies residues 348 to 382 (LLEDEAASHETLALDQETADQPEATVETSKNHEEE).

This sequence belongs to the NusA family. As to quaternary structure, monomer. Binds directly to the core enzyme of the DNA-dependent RNA polymerase and to nascent RNA.

The protein localises to the cytoplasm. Functionally, participates in both transcription termination and antitermination. This is Transcription termination/antitermination protein NusA from Halalkalibacterium halodurans (strain ATCC BAA-125 / DSM 18197 / FERM 7344 / JCM 9153 / C-125) (Bacillus halodurans).